A 199-amino-acid polypeptide reads, in one-letter code: Recombination protein RecR (199 aa).

A C4-type zinc finger spans residues 58–73 (CVRCGNITNADLCGIC). Positions 81 to 176 (GELCVVEDVA…QVTSLAQGVP (96 aa)) constitute a Toprim domain.

This sequence belongs to the RecR family.

Functionally, may play a role in DNA repair. It seems to be involved in an RecBC-independent recombinational process of DNA repair. It may act with RecF and RecO. The protein is Recombination protein RecR of Cereibacter sphaeroides (strain ATCC 17029 / ATH 2.4.9) (Rhodobacter sphaeroides).